Reading from the N-terminus, the 311-residue chain is CD-NTase-associated protein 12 (311 aa).

Positions 4–121 (RIFIGSSKEG…LLGITVPQFE (118 aa)) constitute a TIR domain. Residues 157–311 (STVLAIGYFY…RNIVKIIQEE (155 aa)) are STING domain. 3 residues coordinate 3',3'-c-di-GMP: F168, P232, and D249.

In the C-terminal section; belongs to the bacterial STING family. In terms of assembly, forms homodimers; in the presence of c-di-GMP forms filaments with an ordered array of parallel-stacked subunits.

It catalyses the reaction NAD(+) + H2O = ADP-D-ribose + nicotinamide + H(+). With respect to regulation, NAD(+) hydrolase activity is strongly stimulated by c-di-GMP, weakly by 3'3'-cGAMP, very weakly by c-di-AMP but not at all by 2'3'-cGAMP. Self-association of TIR domains is required for NADase activity. In terms of biological role, effector protein of a CBASS antiviral system with NAD(+) hydrolase activity. CBASS (cyclic oligonucleotide-based antiphage signaling system) provides immunity against bacteriophage. The CD-NTase protein synthesizes cyclic nucleotides in response to infection; these serve as specific second messenger signals. The signals activate a diverse range of effectors, leading to bacterial cell death and thus abortive phage infection. A type I-D CBASS(GG) system. Its function is as follows. Binds c-di-GMP, does not bind cUMP-AMP. Upon activation by c-di-GMP forms filaments which hydrolyze NAD(+); filament formation is required for enzyme activation. The chain is CD-NTase-associated protein 12 from Flavobacterium daejeonense.